We begin with the raw amino-acid sequence, 109 residues long: MPLTPPPDFTKVYLSAALGVSLALVVWLLIRSTLPVVGDRDHNLPHGGWYRDGTKSVFYNSPGRLNSIEARKAPLLGQPWAIVVLLVLLIWASHKLGRPNCRACAGSHT.

The Cytoplasmic portion of the chain corresponds to 1–9; that stretch reads MPLTPPPDF. A helical transmembrane segment spans residues 10–30; that stretch reads TKVYLSAALGVSLALVVWLLI. The Lumenal portion of the chain corresponds to 31–72; that stretch reads RSTLPVVGDRDHNLPHGGWYRDGTKSVFYNSPGRLNSIEARK. A helical transmembrane segment spans residues 73 to 93; sequence APLLGQPWAIVVLLVLLIWAS. Over 94–109 the chain is Cytoplasmic; it reads HKLGRPNCRACAGSHT.

This sequence belongs to the Tymovirales TGBp2 protein family.

The protein localises to the host endoplasmic reticulum membrane. Its function is as follows. Plays a role in viral cell-to-cell propagation, by facilitating genome transport to neighboring plant cells through plasmosdesmata,. This Solanum tuberosum (Potato) protein is Movement protein TGB2.